The primary structure comprises 115 residues: Tyrosine-protein phosphatase 24 (115 aa).

The Tyrosine-protein phosphatase domain maps to 1–115; that stretch reads WMMIVEQKCR…ETGSDAPMVV (115 aa). Substrate is bound at residue Asp83.

This sequence belongs to the protein-tyrosine phosphatase family.

It carries out the reaction O-phospho-L-tyrosyl-[protein] + H2O = L-tyrosyl-[protein] + phosphate. The sequence is that of Tyrosine-protein phosphatase 24 (STY-24) from Styela plicata (Wrinkled sea squirt).